The sequence spans 342 residues: Nucleoid-associated protein Shewmr7_2293 (342 aa).

It belongs to the YejK family.

It is found in the cytoplasm. The protein resides in the nucleoid. In Shewanella sp. (strain MR-7), this protein is Nucleoid-associated protein Shewmr7_2293.